The primary structure comprises 394 residues: Elongation factor Tu (394 aa).

The 195-residue stretch at 10–204 folds into the tr-type G domain; that stretch reads KPHVNVGTIG…ALDTYIPEPE (195 aa). The tract at residues 19 to 26 is G1; sequence GHVDHGKT. 19–26 serves as a coordination point for GTP; the sequence is GHVDHGKT. Residue Thr26 participates in Mg(2+) binding. The interval 60–64 is G2; the sequence is GITIN. The interval 81–84 is G3; that stretch reads DCPG. Residues 81 to 85 and 136 to 139 each bind GTP; these read DCPGH and NKCD. The G4 stretch occupies residues 136-139; the sequence is NKCD. Residues 174 to 176 form a G5 region; it reads SAL.

It belongs to the TRAFAC class translation factor GTPase superfamily. Classic translation factor GTPase family. EF-Tu/EF-1A subfamily. In terms of assembly, monomer.

Its subcellular location is the cytoplasm. It carries out the reaction GTP + H2O = GDP + phosphate + H(+). Functionally, GTP hydrolase that promotes the GTP-dependent binding of aminoacyl-tRNA to the A-site of ribosomes during protein biosynthesis. The protein is Elongation factor Tu of Colwellia psychrerythraea (strain 34H / ATCC BAA-681) (Vibrio psychroerythus).